Here is a 188-residue protein sequence, read N- to C-terminus: Elongation factor P (188 aa).

The protein belongs to the elongation factor P family.

It is found in the cytoplasm. The protein operates within protein biosynthesis; polypeptide chain elongation. Functionally, involved in peptide bond synthesis. Stimulates efficient translation and peptide-bond synthesis on native or reconstituted 70S ribosomes in vitro. Probably functions indirectly by altering the affinity of the ribosome for aminoacyl-tRNA, thus increasing their reactivity as acceptors for peptidyl transferase. The polypeptide is Elongation factor P (Stutzerimonas stutzeri (strain A1501) (Pseudomonas stutzeri)).